A 260-amino-acid polypeptide reads, in one-letter code: Ribosomal RNA small subunit methyltransferase A (260 aa).

The S-adenosyl-L-methionine site is built by Asn16, Leu18, Gly43, Glu64, Asp86, and Asn108.

This sequence belongs to the class I-like SAM-binding methyltransferase superfamily. rRNA adenine N(6)-methyltransferase family. RsmA subfamily.

The protein resides in the cytoplasm. It carries out the reaction adenosine(1518)/adenosine(1519) in 16S rRNA + 4 S-adenosyl-L-methionine = N(6)-dimethyladenosine(1518)/N(6)-dimethyladenosine(1519) in 16S rRNA + 4 S-adenosyl-L-homocysteine + 4 H(+). Its function is as follows. Specifically dimethylates two adjacent adenosines (A1518 and A1519) in the loop of a conserved hairpin near the 3'-end of 16S rRNA in the 30S particle. May play a critical role in biogenesis of 30S subunits. The protein is Ribosomal RNA small subunit methyltransferase A of Buchnera aphidicola subsp. Baizongia pistaciae (strain Bp).